We begin with the raw amino-acid sequence, 220 residues long: Deoxyribose-phosphate aldolase (220 aa).

Asp89 acts as the Proton donor/acceptor in catalysis. Lys151 acts as the Schiff-base intermediate with acetaldehyde in catalysis. The Proton donor/acceptor role is filled by Lys180.

Belongs to the DeoC/FbaB aldolase family. DeoC type 1 subfamily.

It localises to the cytoplasm. It catalyses the reaction 2-deoxy-D-ribose 5-phosphate = D-glyceraldehyde 3-phosphate + acetaldehyde. It functions in the pathway carbohydrate degradation; 2-deoxy-D-ribose 1-phosphate degradation; D-glyceraldehyde 3-phosphate and acetaldehyde from 2-deoxy-alpha-D-ribose 1-phosphate: step 2/2. In terms of biological role, catalyzes a reversible aldol reaction between acetaldehyde and D-glyceraldehyde 3-phosphate to generate 2-deoxy-D-ribose 5-phosphate. The sequence is that of Deoxyribose-phosphate aldolase from Streptococcus pneumoniae serotype 2 (strain D39 / NCTC 7466).